The following is a 246-amino-acid chain: Ureidoacrylate amidohydrolase RutB (246 aa).

Residues Met-1–Pro-27 are disordered. Asp-41 functions as the Proton acceptor in the catalytic mechanism. Lys-150 is a catalytic residue. Catalysis depends on Cys-183, which acts as the Nucleophile.

Belongs to the isochorismatase family. RutB subfamily.

It carries out the reaction (Z)-3-ureidoacrylate + H2O + H(+) = (Z)-3-aminoacrylate + NH4(+) + CO2. The catalysed reaction is (Z)-3-ureidoacrylate + H2O = (Z)-3-aminoacrylate + carbamate + H(+). The enzyme catalyses (Z)-2-methylureidoacrylate + H2O + H(+) = (Z)-2-methylaminoacrylate + NH4(+) + CO2. In terms of biological role, hydrolyzes ureidoacrylate to form aminoacrylate and carbamate. The carbamate hydrolyzes spontaneously, thereby releasing one of the nitrogen atoms of the pyrimidine ring as ammonia and one of its carbon atoms as CO2. This chain is Ureidoacrylate amidohydrolase RutB, found in Rhizobium rhizogenes (strain K84 / ATCC BAA-868) (Agrobacterium radiobacter).